The following is a 400-amino-acid chain: ATP-dependent RNA helicase fal-1 (400 aa).

Residues proline 26–serine 54 carry the Q motif motif. Positions isoleucine 57–isoleucine 227 constitute a Helicase ATP-binding domain. Alanine 70 to threonine 77 serves as a coordination point for ATP. Positions aspartate 175–aspartate 178 match the DEAD box motif. The Helicase C-terminal domain occupies glycine 238–isoleucine 399.

Belongs to the DEAD box helicase family. DDX48/FAL1 subfamily.

It is found in the nucleus. The protein resides in the nucleolus. It catalyses the reaction ATP + H2O = ADP + phosphate + H(+). Its function is as follows. ATP-dependent RNA helicase involved in 40S ribosomal subunit biogenesis. Required for the processing and cleavage of 35S pre-rRNA at sites A0, A1, and A2, leading to mature 18S rRNA. In Neurospora crassa (strain ATCC 24698 / 74-OR23-1A / CBS 708.71 / DSM 1257 / FGSC 987), this protein is ATP-dependent RNA helicase fal-1 (fal-1).